A 169-amino-acid chain; its full sequence is NAD(P)H-quinone oxidoreductase subunit J, chloroplastic (169 aa).

Belongs to the complex I 30 kDa subunit family. As to quaternary structure, NDH is composed of at least 16 different subunits, 5 of which are encoded in the nucleus.

It is found in the plastid. It localises to the chloroplast thylakoid membrane. The enzyme catalyses a plastoquinone + NADH + (n+1) H(+)(in) = a plastoquinol + NAD(+) + n H(+)(out). The catalysed reaction is a plastoquinone + NADPH + (n+1) H(+)(in) = a plastoquinol + NADP(+) + n H(+)(out). In terms of biological role, NDH shuttles electrons from NAD(P)H:plastoquinone, via FMN and iron-sulfur (Fe-S) centers, to quinones in the photosynthetic chain and possibly in a chloroplast respiratory chain. The immediate electron acceptor for the enzyme in this species is believed to be plastoquinone. Couples the redox reaction to proton translocation, and thus conserves the redox energy in a proton gradient. The polypeptide is NAD(P)H-quinone oxidoreductase subunit J, chloroplastic (Zygnema circumcarinatum (Green alga)).